Here is a 277-residue protein sequence, read N- to C-terminus: Transport and Golgi organization protein 11 (277 aa).

The Cytoplasmic portion of the chain corresponds to 1-256 (MVTPQSPTPM…NNEQRTQREK (256 aa)). Disordered regions lie at residues 124–148 (HFPSASEESSPIRANGHHLYGNDLD) and 167–200 (VARMGFQGNDTNSVESDSQLTTGSASKRSQLNQQ). Serine 127, serine 129, serine 132, and serine 133 each carry phosphoserine. The segment covering 174–200 (GNDTNSVESDSQLTTGSASKRSQLNQQ) has biased composition (polar residues). Threonine 177 is subject to Phosphothreonine. Residues serine 179, serine 182, and serine 190 each carry the phosphoserine modification. 2 positions are modified to phosphothreonine: threonine 216 and threonine 222. The stretch at 225-253 (EEILYLRRQLAKLNRRVLNIEINNEQRTQ) forms a coiled coil. The helical; Anchor for type IV membrane protein transmembrane segment at 257–274 (IVYCLGLAYFVLKTIFWL) threads the bilayer. Residues 275–277 (NRN) lie on the Lumenal side of the membrane.

Belongs to the Tango11 family.

Its subcellular location is the endoplasmic reticulum membrane. It is found in the mitochondrion outer membrane. The protein localises to the peroxisome. Its function is as follows. May play a role in mitochondrial and peroxisomal fission. In Drosophila melanogaster (Fruit fly), this protein is Transport and Golgi organization protein 11 (Tango11).